Reading from the N-terminus, the 222-residue chain is Collectrin (222 aa).

An N-terminal signal peptide occupies residues 1-14 (MLWALFFLVTTIHA). The Extracellular segment spans residues 15-141 (ELCHPDAENA…LAPPMEPSVP (127 aa)). One can recognise a Collectrin-like domain in the interval 21-222 (AENAFKVRLS…LTEDERLTPL (202 aa)). 2 N-linked (GlcNAc...) asparagine glycosylation sites follow: Asn76 and Asn93. A helical transmembrane segment spans residues 142-162 (VWIIVFGVIFCIVTVAIALLV). At 163–222 (LSGIRQRRRNNKGPPGVEDAEDKCENIITIENGIPCDPLDMKGGHINDGFLTEDERLTPL) the chain is on the cytoplasmic side. 2 positions are modified to phosphothreonine: Thr214 and Thr220.

Belongs to the CLTRN family. Monomer. Homodimer. Homodimer; dimerization prevents CLTRN cleavage by BACE2. Interacts with SNAPIN. Interacts with SLC6A18; this interaction regulates the trafficking of SLC6A18 to the cell membrane and its amino acid transporter activity. Interacts with SLC6A19; this interaction regulates the trafficking of SLC6A19 to the cell membrane and its amino acid transporter activity. Interacts with SLC6A20B. Post-translationally, glycosylated. Glycosylation is required for plasma membrane localization and for its cleavage by BACE2. Proteolytically processed in pancreatic beta cells by BACE2 leading to the generation and extracellular release of soluble CLTRN, and a corresponding cell-associated C-terminal fragment which is later cleaved by gamma-secretase. This shedding process inactivates CLTRN. Three cleavage sites have been identified for BACE2, two clustered sites after Phe-116 and Leu-118 and a more membrane proximal site at Phe-125; the preferred BACE2 cleavage site seems to be between Phe-125 and Leu-126, Phe-116 and Leu-118 act as alternative sites. In terms of tissue distribution, expressed on the apical surface of the proximal tubules in the renal cortex (at protein level). Kidney; collecting ducts and proximal tubule. Pancreas; beta cells of islets. Expressed in the cerebral cortex, hippocampus, brainstem and cerebellum.

The protein resides in the cell membrane. Functionally, plays an important role in amino acid transport by acting as binding partner of amino acid transporters SLC6A18 and SLC6A19, regulating their trafficking on the cell surface and their activity. May also play a role in trafficking of amino acid transporters SLC3A1 and SLC7A9 to the renal cortical cell membrane. Regulator of SNARE complex function. Stimulator of beta cell replication. This is Collectrin from Mus musculus (Mouse).